A 496-amino-acid polypeptide reads, in one-letter code: Glutathione reductase, cytosolic (496 aa).

Residues serine 32, glycine 33, glutamate 52, threonine 69, cysteine 70, and lysine 78 each coordinate FAD. Serine 32 contributes to the glutathione binding site. Cysteine 70 and cysteine 75 are oxidised to a cystine. Tyrosine 127 provides a ligand contact to glutathione. Position 143 (glycine 143) interacts with FAD. 6 residues coordinate NADP(+): glycine 208, isoleucine 211, glutamate 214, arginine 231, arginine 237, and glycine 294. Positions 335 and 343 each coordinate FAD. Alanine 373 is a binding site for NADP(+). Histidine 469 contacts FAD. Histidine 469 serves as the catalytic Proton acceptor.

This sequence belongs to the class-I pyridine nucleotide-disulfide oxidoreductase family. In terms of assembly, homodimer. FAD is required as a cofactor.

The protein resides in the cytoplasm. The enzyme catalyses 2 glutathione + NADP(+) = glutathione disulfide + NADPH + H(+). In terms of biological role, catalyzes the reduction of glutathione disulfide (GSSG) to reduced glutathione (GSH). Constitutes the major mechanism to maintain a high GSH:GSSG ratio in the cytosol. The chain is Glutathione reductase, cytosolic (GRC2) from Oryza sativa subsp. japonica (Rice).